A 1400-amino-acid polypeptide reads, in one-letter code: Tensin-2 (1400 aa).

The segment at 31–79 (PHSFREKVFRKKTPVCAVCKVTIDGTGVSCRVCKVATHRKCEAKVTSSC) adopts a Phorbol-ester/DAG-type zinc-finger fold. At T91 the chain carries Phosphothreonine. S118 and S120 each carry phosphoserine. The 173-residue stretch at 122 to 294 (DPLMERRWDL…SYFSGLLSGS (173 aa)) folds into the Phosphatase tensin-type domain. The active-site Phosphocysteine intermediate is C231. The region spanning 299-425 (SSPLFLHYVF…ASVEFVFSSS (127 aa)) is the C2 tensin-type domain. Residues 425 to 444 (SPEKVKGNTPRNDPSVSVDY) form a disordered region. Positions 433-444 (TPRNDPSVSVDY) are enriched in polar residues. S455 carries the phosphoserine modification. At Y456 the chain carries Phosphotyrosine. S466 bears the Phosphoserine mark. T474 bears the Phosphothreonine mark. Phosphoserine is present on S481. Y483 carries the post-translational modification Phosphotyrosine. A disordered region spans residues 488 to 536 (RVPRQTPPAPSPELPPPPMLSVSSDSGHSSTLTTEHTAESPGRPPPTAA). Over residues 492 to 506 (QTPPAPSPELPPPPM) the composition is skewed to pro residues. At R555 the chain carries Omega-N-methylarginine. The segment at 809–1114 (CGSPSEGRGY…DVTQPPEHPL (306 aa)) is disordered. A phosphoserine mark is found at S820, S825, S830, S832, and S835. Polar residues-rich tracts occupy residues 898 to 917 (CSAS…SSPV) and 929 to 940 (TRSPSLAPTQRL). Phosphothreonine is present on T909. 3 positions are modified to phosphoserine: S931, S941, and S972. A Phosphothreonine modification is found at T977. Phosphoserine is present on residues S991 and S1003. Residues 1046-1056 (PEPPQSSPTPA) are compositionally biased toward pro residues. Over residues 1082–1098 (SGQQPSPPARSTNQHVT) the composition is skewed to polar residues. S1087 carries the post-translational modification Phosphoserine. The region spanning 1131 to 1238 (WYKPHLSRDQ…SLPCCLRIPS (108 aa)) is the SH2 domain. A Phosphothreonine modification is found at T1173. S1238 is modified (phosphoserine). Residues 1266–1399 (ACSVLYLTSV…FITKVLLGQR (134 aa)) enclose the PTB domain.

Belongs to the PTEN phosphatase protein family. In terms of assembly, interacts with AXL. Interacts with SYK; leading to its phosphorylation. Interacts with SQSTM1 (via PB1 domain); the interaction leads to sequestration of TNS2 in cytoplasmic aggregates with SQSTM1 and promotes TNS2 ubiquitination and proteasomal degradation. Ubiquitinated following sequestration in cytoplasmic aggregates with SQSTM1, leading to proteasomal degradation. In terms of tissue distribution, in the adult kidney, expressed mainly in glomeruli (at protein level). In the newborn kidney, localizes on the basal surface of podocytes along the glomerular basement membrane and not in endothelial cells. Low expression levels in anabolic skeletal muscles.

The protein resides in the cell junction. Its subcellular location is the focal adhesion. It localises to the cell membrane. The protein localises to the cytoplasm. It carries out the reaction O-phospho-L-tyrosyl-[protein] + H2O = L-tyrosyl-[protein] + phosphate. In terms of biological role, tyrosine-protein phosphatase which regulates cell motility, proliferation and muscle-response to insulin. Phosphatase activity is mediated by binding to phosphatidylinositol-3,4,5-triphosphate (PtdIns(3,4,5)P3) via the SH2 domain. In muscles and under catabolic conditions, dephosphorylates IRS1 leading to its degradation and muscle atrophy. Negatively regulates PI3K-AKT pathway activation. Dephosphorylates nephrin NPHS1 in podocytes which affects mTORC1 complex activity. Under normal glucose conditions, NPHS1 outcompetes IRS1 for binding to phosphatidylinositol 3-kinase (PI3K) which balances mTORC1 activity but high glucose conditions lead to up-regulation of TNS2, increased NPHS1 dephosphorylation and activation of mTORC1, contributing to podocyte hypertrophy and proteinuria. Required for correct podocyte morphology, podocyte-glomerular basement membrane interaction and integrity of the glomerular filtration barrier. Enhances RHOA activation in the presence of DLC1. Plays a role in promoting DLC1-dependent remodeling of the extracellular matrix. This Mus musculus (Mouse) protein is Tensin-2 (Tns2).